A 336-amino-acid polypeptide reads, in one-letter code: COP9 signalosome complex subunit 5 (336 aa).

Residues 44–181 (VRISSVAMIK…IGAFRTIPEG (138 aa)) enclose the MPN domain. The Zn(2+) site is built by H127, H129, and D140. The short motif at 127–140 (HSHPGYGCWLSGID) is the JAMM motif element.

It belongs to the peptidase M67A family. CSN5 subfamily. Component of the COP9 signalosome (CSN) complex.

It localises to the cytoplasm. The protein resides in the nucleus. Functionally, catalytic component of the COP9 signalosome (CSN) complex that acts as an regulator of the ubiquitin (Ubl) conjugation pathway by mediating the deneddylation of the cullin subunit of SCF-type E3 ubiquitin-protein ligase complexes. The CSN complex is involved in the regulation of the circadian clock through its control of the stability of the SCF(FWD-1) complex. The protein is COP9 signalosome complex subunit 5 (csn-5) of Neurospora crassa (strain ATCC 24698 / 74-OR23-1A / CBS 708.71 / DSM 1257 / FGSC 987).